The following is a 443-amino-acid chain: Trimethylamine monooxygenase (443 aa).

FAD is bound by residues aspartate 37, glutamine 39, leucine 45, and tryptophan 46. The NADP(+) site is built by tryptophan 70 and asparagine 72. Residues asparagine 72 and valine 125 each coordinate FAD. NADP(+) contacts are provided by tyrosine 170, serine 202, serine 203, serine 205, and arginine 226. Positions 315 and 318 each coordinate FAD. Position 409 (arginine 409) interacts with NADP(+).

The protein belongs to the FMO family. FAD serves as cofactor.

It catalyses the reaction trimethylamine + NADPH + O2 = trimethylamine N-oxide + NADP(+) + H2O. Catalyzes the oxidation of trimethylamine (TMA) to produce trimethylamine N-oxide (TMAO). In vitro, has a broad substrate specificity, oxidizing many nitrogen- and sulfur-containing compounds, including dimethylamine (DMA), dimethylsulfide (DMS) and dimethylsulfoxide (DMSO). This chain is Trimethylamine monooxygenase, found in Pelagibacter ubique (strain HTCC1002).